The chain runs to 416 residues: Glutamyl-tRNA reductase (416 aa).

Substrate-binding positions include 49–52, S105, 110–112, and Q116; these read TCNR and EPQ. C50 functions as the Nucleophile in the catalytic mechanism. NADP(+) is bound at residue 185–190; that stretch reads GAGETI.

Belongs to the glutamyl-tRNA reductase family. As to quaternary structure, homodimer.

It catalyses the reaction (S)-4-amino-5-oxopentanoate + tRNA(Glu) + NADP(+) = L-glutamyl-tRNA(Glu) + NADPH + H(+). The protein operates within porphyrin-containing compound metabolism; protoporphyrin-IX biosynthesis; 5-aminolevulinate from L-glutamyl-tRNA(Glu): step 1/2. Catalyzes the NADPH-dependent reduction of glutamyl-tRNA(Glu) to glutamate 1-semialdehyde (GSA). The chain is Glutamyl-tRNA reductase from Shewanella loihica (strain ATCC BAA-1088 / PV-4).